A 115-amino-acid polypeptide reads, in one-letter code: Ribosome-binding factor A (115 aa).

The protein belongs to the RbfA family. As to quaternary structure, monomer. Binds 30S ribosomal subunits, but not 50S ribosomal subunits or 70S ribosomes.

The protein resides in the cytoplasm. Functionally, one of several proteins that assist in the late maturation steps of the functional core of the 30S ribosomal subunit. Associates with free 30S ribosomal subunits (but not with 30S subunits that are part of 70S ribosomes or polysomes). Required for efficient processing of 16S rRNA. May interact with the 5'-terminal helix region of 16S rRNA. The protein is Ribosome-binding factor A of Bacillus velezensis (strain DSM 23117 / BGSC 10A6 / LMG 26770 / FZB42) (Bacillus amyloliquefaciens subsp. plantarum).